We begin with the raw amino-acid sequence, 149 residues long: Transcriptional repressor NrdR (149 aa).

Residues 3–34 fold into a zinc finger; sequence CPFCCAVDTKVIDSRLVGEGSSVRRRRQCVVC. Residues 49 to 139 form the ATP-cone domain; the sequence is PRVVKSNDVR…VYRSFEDIRE (91 aa).

This sequence belongs to the NrdR family. Zn(2+) serves as cofactor.

In terms of biological role, negatively regulates transcription of bacterial ribonucleotide reductase nrd genes and operons by binding to NrdR-boxes. The sequence is that of Transcriptional repressor NrdR from Erwinia tasmaniensis (strain DSM 17950 / CFBP 7177 / CIP 109463 / NCPPB 4357 / Et1/99).